Reading from the N-terminus, the 224-residue chain is uncharacterized protein (224 aa).

Aspartate 52 is an active-site residue.

This sequence belongs to the pseudouridine synthase RluA family.

It catalyses the reaction a uridine in RNA = a pseudouridine in RNA. This is an uncharacterized protein from Haemophilus influenzae (strain ATCC 51907 / DSM 11121 / KW20 / Rd).